A 273-amino-acid polypeptide reads, in one-letter code: Galactose-binding lectin (273 aa).

Positions 1–23 (MKPFCVFLTFFLLLAASSKKVDS) are cleaved as a signal peptide. The Mn(2+) site is built by Glu-144 and Asp-146. Ca(2+)-binding residues include Asp-146, Tyr-148, Asn-150, and Asp-155. Residues Asp-155 and His-160 each contribute to the Mn(2+) site.

Belongs to the leguminous lectin family. Homotetramer.

Functionally, D-galactose specific lectin. This Arachis hypogaea (Peanut) protein is Galactose-binding lectin.